Consider the following 242-residue polypeptide: C-reactive protein 3.3 (242 aa).

The N-terminal stretch at 1–24 is a signal peptide; sequence MKTFHGPTCGTAVSLCLLLFLTSA. The 212-residue stretch at 30 to 241 folds into the Pentraxin (PTX) domain; it reads ITSKVKFPPS…GVVLSPNEIC (212 aa). Residues Thr-60 and Tyr-63 each coordinate phosphocholine. 2 cysteine pairs are disulfide-bonded: Cys-62–Cys-125 and Cys-112–Cys-144. Residues Asp-85 and Asn-86 each coordinate Ca(2+). A glycan (N-linked (GlcNAc...) asparagine) is linked at Asn-147. Residues Gln-169, Asp-170, and Gln-180 each contribute to the Ca(2+) site. A disulfide bridge links Cys-207 with Cys-241.

Belongs to the pentraxin family. As to quaternary structure, homopentamer. Pentraxin (or pentaxin) have a discoid arrangement of 5 non-covalently bound subunits. Ca(2+) serves as cofactor.

Its subcellular location is the secreted. Might serve the role of immunoglobulins. In Limulus polyphemus (Atlantic horseshoe crab), this protein is C-reactive protein 3.3.